A 553-amino-acid chain; its full sequence is Heterochromatin protein 1-binding protein 3 (553 aa).

N-acetylalanine is present on Ala-2. Ser-6 carries the phosphoserine modification. 2 disordered regions span residues 29 to 134 (KLGE…KTIP) and 140 to 159 (SASQ…SPRP). Thr-51 bears the Phosphothreonine mark. The span at 60 to 71 (GEEEKPEPDISS) shows a compositional bias: acidic residues. A Glycyl lysine isopeptide (Lys-Gly) (interchain with G-Cter in SUMO2) cross-link involves residue Lys-64. Position 85 is a phosphothreonine (Thr-85). Over residues 94-127 (EQPKGEPENEEKEENKSSEETKKDEKDQSKEKEK) the composition is skewed to basic and acidic residues. Lys-97 is covalently cross-linked (Glycyl lysine isopeptide (Lys-Gly) (interchain with G-Cter in SUMO2)). A compositionally biased stretch (polar residues) spans 140–154 (SASQLARAQKQTPMA). Phosphoserine occurs at positions 142, 155, and 156. Positions 157-232 (PRPKMDAILT…GASGSFVVVQ (76 aa)) constitute an H15 1 domain. At Lys-190 the chain carries N6-acetyllysine. The interval 230-255 (VVQKSRKTPQKSRNRKNRSSAVDPEP) is disordered. Positions 233-247 (KSRKTPQKSRNRKNR) are enriched in basic residues. 2 positions are modified to phosphoserine: Ser-248 and Ser-249. A PxVxL motif motif is present at residues 255 to 259 (PQVKL). 2 consecutive H15 domains span residues 255-330 (PQVK…QLKK) and 337-413 (LGGS…QLCF). Lys-258 participates in a covalent cross-link: Glycyl lysine isopeptide (Lys-Gly) (interchain with G-Cter in SUMO2). Residues 422–553 (LFPKKEPDDS…TMKKSFRVKK (132 aa)) form a disordered region. Positions 430 to 450 (DSRDEDEDEDESSEEDSEDEE) are enriched in acidic residues. A phosphoserine mark is found at Ser-441, Ser-442, and Ser-446. Basic residues predominate over residues 489–510 (GKARPLPKKAPPKAKTPAKKTR). Residues 517–527 (KKPSGGSSKKP) show a composition bias toward low complexity. Residues 543-553 (STMKKSFRVKK) show a composition bias toward basic residues.

As to quaternary structure, interacts (via PxVxL motif) with CBX5 (via Trp-174).

The protein localises to the nucleus. It is found in the chromosome. In terms of biological role, component of heterochromatin that maintains heterochromatin integrity during G1/S progression and regulates the duration of G1 phase to critically influence cell proliferative capacity. Mediates chromatin condensation during hypoxia, leading to increased tumor cell viability, radio-resistance, chemo-resistance and self-renewal. This is Heterochromatin protein 1-binding protein 3 (HP1BP3) from Homo sapiens (Human).